A 202-amino-acid polypeptide reads, in one-letter code: Holliday junction resolvase RecU (202 aa).

Residues Thr85, Asp87, Glu100, and Gln119 each coordinate Mg(2+).

The protein belongs to the RecU family. Mg(2+) is required as a cofactor.

Its subcellular location is the cytoplasm. It catalyses the reaction Endonucleolytic cleavage at a junction such as a reciprocal single-stranded crossover between two homologous DNA duplexes (Holliday junction).. Endonuclease that resolves Holliday junction intermediates in genetic recombination. Cleaves mobile four-strand junctions by introducing symmetrical nicks in paired strands. Promotes annealing of linear ssDNA with homologous dsDNA. Required for DNA repair, homologous recombination and chromosome segregation. The sequence is that of Holliday junction resolvase RecU from Streptococcus uberis (strain ATCC BAA-854 / 0140J).